Reading from the N-terminus, the 248-residue chain is Pulmonary surfactant-associated protein A1 (248 aa).

An N-terminal signal peptide occupies residues 1-20; it reads MWLCPLALNLILMAASGAVC. The Collagen-like domain occupies 28-100; it reads GSPGIPGTPG…PGERGPPGLP (73 aa). 4-hydroxyproline is present on residues P30, P33, P36, P42, P54, P57, P63, P67, and P70. The tract at residues 31–101 is disordered; it reads GIPGTPGSHG…GERGPPGLPA (71 aa). Positions 42–51 are enriched in basic and acidic residues; that stretch reads PGRDGRDGLK. Pro residues predominate over residues 54-70; the sequence is PGPPGPMGPPGEMPCPP. The C-type lectin domain occupies 132 to 248; it reads MTVGEKVFSS…LYSRLTICEF (117 aa). 2 disulfides stabilise this stretch: C155–C246 and C224–C238. N207 carries an N-linked (GlcNAc...) asparagine glycan.

It belongs to the SFTPA family. Oligomeric complex of 6 set of homotrimers. Interacts with CD93. As to quaternary structure, (Microbial infection) Binds M.bovis cell surface protein Apa via its glycosylated sites; probably also recognizes other bacterial moieties. In terms of assembly, (Microbial infection) Binds to the S.aureus extracellular adherence protein, Eap, thereby enhancing phagocytosis and killing of S.aureus by alveolar macrophages. (Microbial infection) Interacts with M.pneumoniae CARDS toxin; CARDS probably uses this protein as a receptor. In terms of processing, N-acetylated.

It is found in the secreted. Its subcellular location is the extracellular space. The protein resides in the extracellular matrix. It localises to the surface film. Functionally, in presence of calcium ions, it binds to surfactant phospholipids and contributes to lower the surface tension at the air-liquid interface in the alveoli of the mammalian lung and is essential for normal respiration. Enhances the expression of MYO18A/SP-R210 on alveolar macrophages. (Microbial infection) Recognition of M.tuberculosis by dendritic cells may occur partially via this molecule. Can recognize, bind, and opsonize pathogens to enhance their elimination by alveolar macrophages. In terms of biological role, (Microbial infection) Binds M.pneumoniae CARDS toxin, serves as one receptor for this pathogen. When SFTPA1 is down-regulated by siRNA, less toxin binds to human cells and less vacuolization (a symptom of M.pneumoniae infection) is seen. The sequence is that of Pulmonary surfactant-associated protein A1 (SFTPA1) from Homo sapiens (Human).